The chain runs to 277 residues: Protein RKD3 (277 aa).

The RWP-RK domain occupies 142 to 226 (KRIIMKRRYR…LGNTKGRTPK (85 aa)). Residues 201–246 (RKLTSLNALIANLKDLLGNTKGRTPKSKLRNALELLEMEKKMIEEV) are a coiled coil.

The protein resides in the nucleus. Putative transcription factor. This chain is Protein RKD3 (RKD3), found in Arabidopsis thaliana (Mouse-ear cress).